The following is a 199-amino-acid chain: Recombination protein RecR (199 aa).

The C4-type zinc finger occupies 56–71 (CSICFNWSAEDPCEIC). The Toprim domain occupies 79–174 (SLWCVVADVK…TLRMTRLAFG (96 aa)).

This sequence belongs to the RecR family.

In terms of biological role, may play a role in DNA repair. It seems to be involved in an RecBC-independent recombinational process of DNA repair. It may act with RecF and RecO. In Synechococcus sp. (strain JA-2-3B'a(2-13)) (Cyanobacteria bacterium Yellowstone B-Prime), this protein is Recombination protein RecR.